A 138-amino-acid chain; its full sequence is Superoxide dismutase [Mn] (138 aa).

Residues Gln-1, His-49, Asp-133, and His-137 each coordinate Mn(2+).

Belongs to the iron/manganese superoxide dismutase family. Requires Mn(2+) as cofactor.

The catalysed reaction is 2 superoxide + 2 H(+) = H2O2 + O2. Functionally, destroys superoxide anion radicals which are normally produced within the cells and which are toxic to biological systems. The sequence is that of Superoxide dismutase [Mn] (sodA) from Mycobacteroides chelonae (Mycobacterium chelonae).